The chain runs to 330 residues: Malate dehydrogenase (330 aa).

12–18 contacts NAD(+); the sequence is GAAGQIG. Substrate contacts are provided by Arg-93 and Arg-99. NAD(+)-binding positions include Asn-106, Gln-113, and 130–132; that span reads VGN. Residues Asn-132 and Arg-163 each coordinate substrate. His-188 serves as the catalytic Proton acceptor.

Belongs to the LDH/MDH superfamily. MDH type 2 family.

It catalyses the reaction (S)-malate + NAD(+) = oxaloacetate + NADH + H(+). In terms of biological role, catalyzes the reversible oxidation of malate to oxaloacetate. This is Malate dehydrogenase from Legionella pneumophila (strain Lens).